Reading from the N-terminus, the 311-residue chain is Lipoyl synthase (311 aa).

C47, C52, C58, C73, C77, C80, and S287 together coordinate [4Fe-4S] cluster. A Radical SAM core domain is found at 59–276; the sequence is WTKKHATVMI…AQIARAKGFL (218 aa).

Belongs to the radical SAM superfamily. Lipoyl synthase family. Requires [4Fe-4S] cluster as cofactor.

It is found in the cytoplasm. The enzyme catalyses [[Fe-S] cluster scaffold protein carrying a second [4Fe-4S](2+) cluster] + N(6)-octanoyl-L-lysyl-[protein] + 2 oxidized [2Fe-2S]-[ferredoxin] + 2 S-adenosyl-L-methionine + 4 H(+) = [[Fe-S] cluster scaffold protein] + N(6)-[(R)-dihydrolipoyl]-L-lysyl-[protein] + 4 Fe(3+) + 2 hydrogen sulfide + 2 5'-deoxyadenosine + 2 L-methionine + 2 reduced [2Fe-2S]-[ferredoxin]. The protein operates within protein modification; protein lipoylation via endogenous pathway; protein N(6)-(lipoyl)lysine from octanoyl-[acyl-carrier-protein]: step 2/2. Functionally, catalyzes the radical-mediated insertion of two sulfur atoms into the C-6 and C-8 positions of the octanoyl moiety bound to the lipoyl domains of lipoate-dependent enzymes, thereby converting the octanoylated domains into lipoylated derivatives. The protein is Lipoyl synthase of Sphingopyxis alaskensis (strain DSM 13593 / LMG 18877 / RB2256) (Sphingomonas alaskensis).